The following is a 203-amino-acid chain: Proline-rich protein 1 (203 aa).

The N-terminal stretch at 1–20 (MMKLGLYLTLLFLSVWTVSG) is a signal peptide.

In terms of tissue distribution, component of the acid-insoluble and acid-soluble organic matrix of calcified layers of the shell (at protein level).

Its subcellular location is the secreted. The protein is Proline-rich protein 1 of Lottia gigantea (Giant owl limpet).